A 358-amino-acid chain; its full sequence is Peptide chain release factor 1 (358 aa).

At Gln234 the chain carries N5-methylglutamine.

The protein belongs to the prokaryotic/mitochondrial release factor family. Methylated by PrmC. Methylation increases the termination efficiency of RF1.

Its subcellular location is the cytoplasm. In terms of biological role, peptide chain release factor 1 directs the termination of translation in response to the peptide chain termination codons UAG and UAA. The chain is Peptide chain release factor 1 from Chloroherpeton thalassium (strain ATCC 35110 / GB-78).